A 463-amino-acid polypeptide reads, in one-letter code: UDP-glucosyltransferase A1 (463 aa).

This sequence belongs to the UDP-glycosyltransferase family.

The enzyme catalyses 18-hydroxy-(9Z)-octadecenoate + UDP-alpha-D-glucose = (9Z)-18-hydroxyoctadec-9-enoate 18-O-beta-D-glucoside + UDP + H(+). It catalyses the reaction 17-hydroxy-(9Z)-octadecenoate + UDP-alpha-D-glucose = (9Z)-17-hydroxyoctadec-9-enoate 17-O-beta-D-glucoside + UDP + H(+). In terms of biological role, catalyzes the first glycosylation step of sophorolipid biosynthesis, the coupling of glucose to a hydroxylated fatty acid to give rise to a glucolipid. Can glycosylate all hydroxyl fatty acids generated by cytochrome P450 monooxygenases CYP52M1, CYP52N1 and CYP52E3 into their corresponding glucolipids. Main products are 17-O- and 18-O-(beta-D-glucopyranosyl)-octadecenoic acids. The protein is UDP-glucosyltransferase A1 of Starmerella bombicola (Yeast).